Here is a 459-residue protein sequence, read N- to C-terminus: MAP kinase-interacting serine/threonine-protein kinase 2 (459 aa).

Residues 28-67 (LDPAQHGDSDFSPQCEARPDMPSSQPIDIPDAKKRGRKKK) form a disordered region. The Nuclear localization signal signature appears at 60–66 (KKRGRKK). Residue serine 74 is modified to Phosphoserine. One can recognise a Protein kinase domain in the interval 84–368 (QLQEDVLGEG…AAQVLQHPWV (285 aa)). Residues 90–98 (LGEGAHARV) and lysine 113 each bind ATP. 160 to 162 (EKM) contacts staurosporine. Catalysis depends on aspartate 205, which acts as the Proton acceptor. Staurosporine is bound at residue glutamate 209. Residues threonine 244 and threonine 249 each carry the phosphothreonine modification. Cysteine 299, cysteine 311, and cysteine 314 together coordinate Zn(2+). A Phosphothreonine modification is found at threonine 379. Phosphoserine occurs at positions 431 and 434. The MAP kinase binding motif lies at 438–442 (LAQRR). Serine 446 carries the post-translational modification Phosphoserine. Threonine 450 is modified (phosphothreonine).

Belongs to the protein kinase superfamily. CAMK Ser/Thr protein kinase family. Monomer. Interacts with the C-terminal regions of EIF4G1 and EIF4G2; this interaction is promoted when MAPK pathways are repressed but repressed upon ERK proteins activation. Also binds to dephosphorylated MAPK3/ERK1 and MAPK1/ER2K. Interaction with phosphorylated MAPK3/ERK1 and MAPK1/ER2K protects it from dephosphorylation and inactivation. Interacts with ESR2 and EIF4E in the nucleus. The cofactor is Mg(2+). Zn(2+) serves as cofactor. Dual phosphorylation of Thr-244 and Thr-249 activates the kinase. Phosphorylation of Thr-379 activates the kinase. Phosphorylated upon arsenic trioxide As(2)O(3) treatment. Phosphorylated by MAPK1/ERK2, MAPK11 and MAPK14. Dephosphorylated by PP2A.

The protein resides in the cytoplasm. It is found in the nucleus. It localises to the PML body. The catalysed reaction is L-seryl-[protein] + ATP = O-phospho-L-seryl-[protein] + ADP + H(+). The enzyme catalyses L-threonyl-[protein] + ATP = O-phospho-L-threonyl-[protein] + ADP + H(+). Inhibited by CGP57380 and staurosporine. Serine/threonine-protein kinase that phosphorylates SFPQ/PSF, HNRNPA1 and EIF4E. May play a role in the response to environmental stress and cytokines. Appears to regulate translation by phosphorylating EIF4E, thus increasing the affinity of this protein for the 7-methylguanosine-containing mRNA cap. Required for mediating PP2A-inhibition-induced EIF4E phosphorylation. Triggers EIF4E shuttling from cytoplasm to nucleus. Enhances the formation of EIF4F complex in pachytene spermatocytes, thus promoting mRNA translation during spermatogenesis. Displays a high basal kinase activity. Acts as a mediator of the suppressive effects of IFNgamma on hematopoiesis. Negative regulator for signals that control generation of arsenic trioxide As(2)O(3)-dependent apoptosis and anti-leukemic responses. Involved in anti-apoptotic signaling in response to serum withdrawal. The sequence is that of MAP kinase-interacting serine/threonine-protein kinase 2 (Mknk2) from Rattus norvegicus (Rat).